The sequence spans 523 residues: Tyrosine/DOPA decarboxylase 5 (523 aa).

The span at methionine 1–proline 19 shows a compositional bias: polar residues. Disordered stretches follow at residues methionine 1 to leucine 20 and serine 47 to histidine 66. Lysine 321 bears the N6-(pyridoxal phosphate)lysine mark.

The protein belongs to the group II decarboxylase family. Homodimer. The cofactor is pyridoxal 5'-phosphate. Roots.

It carries out the reaction L-tyrosine + H(+) = tyramine + CO2. The enzyme catalyses L-dopa + H(+) = dopamine + CO2. It catalyses the reaction 5-hydroxy-L-tryptophan + H(+) = serotonin + CO2. Its function is as follows. May play an important role in providing precursors for alkaloid synthesis in the roots and germinating seedlings. This is Tyrosine/DOPA decarboxylase 5 (TYDC5) from Papaver somniferum (Opium poppy).